The sequence spans 90 residues: N(2)-fixation sustaining protein CowN (90 aa).

Belongs to the CowN family.

Its function is as follows. Is required to sustain N(2)-dependent growth in the presence of low levels of carbon monoxide (CO). Probably acts by protecting the N(2) fixation ability of the nitrogenase complex, which is inactivated in the presence of CO. This chain is N(2)-fixation sustaining protein CowN, found in Methylocella silvestris (strain DSM 15510 / CIP 108128 / LMG 27833 / NCIMB 13906 / BL2).